Reading from the N-terminus, the 678-residue chain is Glycine--tRNA ligase beta subunit (678 aa).

It belongs to the class-II aminoacyl-tRNA synthetase family. Tetramer of two alpha and two beta subunits.

It is found in the cytoplasm. The catalysed reaction is tRNA(Gly) + glycine + ATP = glycyl-tRNA(Gly) + AMP + diphosphate. This chain is Glycine--tRNA ligase beta subunit, found in Streptococcus suis (strain 98HAH33).